Here is a 286-residue protein sequence, read N- to C-terminus: 2-dehydro-3-deoxyphosphooctonate aldolase (286 aa).

It belongs to the KdsA family.

It localises to the cytoplasm. It carries out the reaction D-arabinose 5-phosphate + phosphoenolpyruvate + H2O = 3-deoxy-alpha-D-manno-2-octulosonate-8-phosphate + phosphate. It functions in the pathway carbohydrate biosynthesis; 3-deoxy-D-manno-octulosonate biosynthesis; 3-deoxy-D-manno-octulosonate from D-ribulose 5-phosphate: step 2/3. The protein operates within bacterial outer membrane biogenesis; lipopolysaccharide biosynthesis. The chain is 2-dehydro-3-deoxyphosphooctonate aldolase from Haemophilus ducreyi (strain 35000HP / ATCC 700724).